The chain runs to 118 residues: Integration host factor subunit alpha (118 aa).

Residues 97-118 (NGAMPMSTEESDENTAQSASGG) form a disordered region.

It belongs to the bacterial histone-like protein family. As to quaternary structure, heterodimer of an alpha and a beta chain.

Functionally, this protein is one of the two subunits of integration host factor, a specific DNA-binding protein that functions in genetic recombination as well as in transcriptional and translational control. This Rhodopseudomonas palustris (strain ATCC BAA-98 / CGA009) protein is Integration host factor subunit alpha.